Reading from the N-terminus, the 254-residue chain is Large ribosomal subunit protein uL2 (254 aa).

This sequence belongs to the universal ribosomal protein uL2 family. As to quaternary structure, component of the large ribosomal subunit. Mature ribosomes consist of a small (40S) and a large (60S) subunit. The 40S subunit contains about 32 different proteins and 1 molecule of RNA (18S). The 60S subunit contains 45 different proteins and 3 molecules of RNA (25S, 5.8S and 5S).

The protein localises to the cytoplasm. In terms of biological role, component of the ribosome, a large ribonucleoprotein complex responsible for the synthesis of proteins in the cell. The small ribosomal subunit (SSU) binds messenger RNAs (mRNAs) and translates the encoded message by selecting cognate aminoacyl-transfer RNA (tRNA) molecules. The large subunit (LSU) contains the ribosomal catalytic site termed the peptidyl transferase center (PTC), which catalyzes the formation of peptide bonds, thereby polymerizing the amino acids delivered by tRNAs into a polypeptide chain. The nascent polypeptides leave the ribosome through a tunnel in the LSU and interact with protein factors that function in enzymatic processing, targeting, and the membrane insertion of nascent chains at the exit of the ribosomal tunnel. The protein is Large ribosomal subunit protein uL2 of Candida albicans (strain SC5314 / ATCC MYA-2876) (Yeast).